Reading from the N-terminus, the 272-residue chain is 4-hydroxy-tetrahydrodipicolinate reductase (272 aa).

12–17 (GALGKM) lines the NAD(+) pocket. K39 provides a ligand contact to NADP(+). Residues 102–104 (GTT) and 126–129 (SSNY) each bind NAD(+). H159 (proton donor/acceptor) is an active-site residue. H160 provides a ligand contact to (S)-2,3,4,5-tetrahydrodipicolinate. K163 acts as the Proton donor in catalysis. 169–170 (GT) contacts (S)-2,3,4,5-tetrahydrodipicolinate.

The protein belongs to the DapB family. As to quaternary structure, homotetramer.

It localises to the cytoplasm. It catalyses the reaction (S)-2,3,4,5-tetrahydrodipicolinate + NAD(+) + H2O = (2S,4S)-4-hydroxy-2,3,4,5-tetrahydrodipicolinate + NADH + H(+). The enzyme catalyses (S)-2,3,4,5-tetrahydrodipicolinate + NADP(+) + H2O = (2S,4S)-4-hydroxy-2,3,4,5-tetrahydrodipicolinate + NADPH + H(+). Its pathway is amino-acid biosynthesis; L-lysine biosynthesis via DAP pathway; (S)-tetrahydrodipicolinate from L-aspartate: step 4/4. Catalyzes the conversion of 4-hydroxy-tetrahydrodipicolinate (HTPA) to tetrahydrodipicolinate. This Buchnera aphidicola subsp. Baizongia pistaciae (strain Bp) protein is 4-hydroxy-tetrahydrodipicolinate reductase.